The following is a 286-amino-acid chain: Mating type protein A-1 (286 aa).

A DNA-binding region (alpha box) is located at residues 40-95 (AAKKKVNGFMSFRSYYSPLFSQLPQKERSPFMTILWQHDPFHNEWNFMCSVYSSIR).

This sequence belongs to the MATALPHA1 family.

The protein resides in the nucleus. Its function is as follows. Required for expression of the heterokaryon incompatibility and sexual functions. In Neurospora africana, this protein is Mating type protein A-1 (MTA-1).